An 883-amino-acid chain; its full sequence is Phosphoenolpyruvate carboxylase (883 aa).

Active-site residues include His-138 and Lys-546.

The protein belongs to the PEPCase type 1 family. Requires Mg(2+) as cofactor.

The catalysed reaction is oxaloacetate + phosphate = phosphoenolpyruvate + hydrogencarbonate. In terms of biological role, forms oxaloacetate, a four-carbon dicarboxylic acid source for the tricarboxylic acid cycle. In Escherichia fergusonii (strain ATCC 35469 / DSM 13698 / CCUG 18766 / IAM 14443 / JCM 21226 / LMG 7866 / NBRC 102419 / NCTC 12128 / CDC 0568-73), this protein is Phosphoenolpyruvate carboxylase.